The sequence spans 201 residues: MAGKSSLFKIILLGDGGVGKSSLMNRYVTNKFDSQLFHTIGVEFLNKDLEVDGHFVTMQIWDTAGQERFRSLRTPFYRGSDCCLLTFSVDDSQSFQNLSNWKKEFIYYADVKEPESFPFVILGNKTDIKERQVSTEEAQAWCKDNGDYPYFETSAKDSTNVAAAFEEAVRRILATEDRSDHLIQTDTVNLHRKPKPNSSCC.

At A2 the chain carries N-acetylalanine. Positions 17, 18, 19, 20, 21, 22, 34, 38, and 39 each coordinate GTP. Position 21 (S21) interacts with Mg(2+). Residues 31 to 42 (KFDSQLFHTIGV) carry the Switch 1 motif. At S34 the chain carries Phosphoserine. Mg(2+)-binding residues include T39 and D62. The short motif at 64-78 (AGQERFRSLRTPFYR) is the Switch 2 element. Residues G65, N124, K125, D127, and K156 each contribute to the GTP site. Residue S179 is modified to Phosphoserine. At T187 the chain carries Phosphothreonine. S-geranylgeranyl cysteine attachment occurs at residues C200 and C201.

This sequence belongs to the small GTPase superfamily. Rab family. Interacts (preferentially in its GTP-bound form) with GCC2 (via its GRIP domain). Interacts (GTP-bound form) with SGSM1; the GDP-bound form has much lower affinity for SGSM1. Interacts with SGSM2. The GTP-bound form but not the GDP-bound form interacts with HPS4 and the BLOC-3 complex (heterodimer of HPS1 and HPS4) but does not interact with HPS1 alone. Interacts (GTP-bound form) with NDE1; two RAB9A-GTP molecules lie on the opposite sides of the NDE1 homodimer; the interaction leads to RAB9A-dynein motor tethering. Interacts (GTP-bound form) with NDEL1. The cofactor is Mg(2+).

The protein localises to the cell membrane. It is found in the endoplasmic reticulum membrane. Its subcellular location is the golgi apparatus membrane. It localises to the late endosome. The protein resides in the cytoplasmic vesicle. The protein localises to the phagosome membrane. It is found in the phagosome. Its subcellular location is the cytoplasmic vesicle membrane. It localises to the melanosome. It carries out the reaction GTP + H2O = GDP + phosphate + H(+). With respect to regulation, regulated by guanine nucleotide exchange factors (GEFs) which promote the exchange of bound GDP for free GTP. Regulated by GTPase activating proteins (GAPs) which increase the GTP hydrolysis activity. Inhibited by GDP dissociation inhibitors (GDIs). Functionally, the small GTPases Rab are key regulators of intracellular membrane trafficking, from the formation of transport vesicles to their fusion with membranes. Rabs cycle between an inactive GDP-bound form and an active GTP-bound form that is able to recruit to membranes different sets of downstream effectors directly responsible for vesicle formation, movement, tethering and fusion. RAB9A is involved in the transport of proteins between the endosomes and the trans-Golgi network (TGN). Specifically uses NDE1/NDEL1 as an effector to interact with the dynein motor complex in order to control retrograde trafficking of RAB9-associated late endosomes to the TGN. Involved in the recruitment of SGSM2 to melanosomes and is required for the proper trafficking of melanogenic enzymes TYR, TYRP1 and DCT/TYRP2 to melanosomes in melanocytes. This is Ras-related protein Rab-9A from Rattus norvegicus (Rat).